The primary structure comprises 215 residues: Kunitz trypsin inhibitor 4 (215 aa).

Positions 1-28 are cleaved as a signal peptide; it reads MTKTTKTMNPKFYLVLALTAVLASNAYG. 2 cysteine pairs are disulfide-bonded: Cys-66–Cys-112 and Cys-165–Cys-176. N-linked (GlcNAc...) asparagine glycosylation is present at Asn-206.

It belongs to the protease inhibitor I3 (leguminous Kunitz-type inhibitor) family. Expressed in roots.

It localises to the endoplasmic reticulum. Its function is as follows. Exhibits Kunitz trypsin protease inhibitor activity. Involved in modulating programmed cell death (PCD) in plant-pathogen interactions. Can inhibit both serine proteases and cysteine proteases. May be involved in the modulation of the proteases that participate in the hydrolysis of dietary proteins in the gut of spider mites. The protein is Kunitz trypsin inhibitor 4 of Arabidopsis thaliana (Mouse-ear cress).